We begin with the raw amino-acid sequence, 862 residues long: DNA mismatch repair protein MutS (862 aa).

Residue 603–610 (GPNMSGKS) participates in ATP binding.

This sequence belongs to the DNA mismatch repair MutS family.

This protein is involved in the repair of mismatches in DNA. It is possible that it carries out the mismatch recognition step. This protein has a weak ATPase activity. This is DNA mismatch repair protein MutS from Bacillus velezensis (strain DSM 23117 / BGSC 10A6 / LMG 26770 / FZB42) (Bacillus amyloliquefaciens subsp. plantarum).